Consider the following 344-residue polypeptide: Golgi-associated RAB2 interactor protein 1B (344 aa).

The tract at residues Phe271–Ser293 is disordered.

It belongs to the GARIN family.

The protein localises to the golgi apparatus. Functionally, RAB2B effector protein required for accurate acrosome formation and normal male fertility. In complex with RAB2A/RAB2B, seems to suppress excessive vesicle trafficking during acrosome formation. In Homo sapiens (Human), this protein is Golgi-associated RAB2 interactor protein 1B.